The chain runs to 384 residues: Erythronate-4-phosphate dehydrogenase (384 aa).

Substrate contacts are provided by Ser-45 and Thr-66. Residues Asp-147 and Thr-177 each coordinate NAD(+). Arg-210 is an active-site residue. Asp-234 lines the NAD(+) pocket. Glu-239 is a catalytic residue. Catalysis depends on His-256, which acts as the Proton donor. Gly-259 provides a ligand contact to NAD(+). Tyr-260 provides a ligand contact to substrate.

The protein belongs to the D-isomer specific 2-hydroxyacid dehydrogenase family. PdxB subfamily. As to quaternary structure, homodimer.

Its subcellular location is the cytoplasm. It carries out the reaction 4-phospho-D-erythronate + NAD(+) = (R)-3-hydroxy-2-oxo-4-phosphooxybutanoate + NADH + H(+). It participates in cofactor biosynthesis; pyridoxine 5'-phosphate biosynthesis; pyridoxine 5'-phosphate from D-erythrose 4-phosphate: step 2/5. Catalyzes the oxidation of erythronate-4-phosphate to 3-hydroxy-2-oxo-4-phosphonooxybutanoate. The sequence is that of Erythronate-4-phosphate dehydrogenase from Marinobacter nauticus (strain ATCC 700491 / DSM 11845 / VT8) (Marinobacter aquaeolei).